Here is a 232-residue protein sequence, read N- to C-terminus: Enolase-phosphatase E1 (232 aa).

Belongs to the HAD-like hydrolase superfamily. MasA/MtnC family. As to quaternary structure, monomer. Requires Mg(2+) as cofactor.

It catalyses the reaction 5-methylsulfanyl-2,3-dioxopentyl phosphate + H2O = 1,2-dihydroxy-5-(methylsulfanyl)pent-1-en-3-one + phosphate. Its pathway is amino-acid biosynthesis; L-methionine biosynthesis via salvage pathway; L-methionine from S-methyl-5-thio-alpha-D-ribose 1-phosphate: step 3/6. It participates in amino-acid biosynthesis; L-methionine biosynthesis via salvage pathway; L-methionine from S-methyl-5-thio-alpha-D-ribose 1-phosphate: step 4/6. Bifunctional enzyme that catalyzes the enolization of 2,3-diketo-5-methylthiopentyl-1-phosphate (DK-MTP-1-P) into the intermediate 2-hydroxy-3-keto-5-methylthiopentenyl-1-phosphate (HK-MTPenyl-1-P), which is then dephosphorylated to form the acireductone 1,2-dihydroxy-3-keto-5-methylthiopentene (DHK-MTPene). This is Enolase-phosphatase E1 from Xanthomonas oryzae pv. oryzae (strain KACC10331 / KXO85).